A 712-amino-acid chain; its full sequence is Copper amine oxidase 1 (712 aa).

319–330 (AFDLGEYGAGYL) is a binding site for substrate. Asp-321 acts as the Proton acceptor in catalysis. An intrachain disulfide couples Cys-340 to Cys-366. 404 to 409 (AANYEY) serves as a coordination point for substrate. Tyr-407 acts as the Schiff-base intermediate with substrate; via topaquinone in catalysis. At Tyr-407 the chain carries 2',4',5'-topaquinone. Residues His-458 and His-460 each coordinate Cu cation. Residues Asp-616 and Ile-617 each coordinate Mn(2+). His-627 serves as a coordination point for Cu cation.

It belongs to the copper/topaquinone oxidase family. In terms of assembly, homodimer. Cu cation serves as cofactor. The cofactor is Zn(2+). L-topaquinone is required as a cofactor. Requires Mn(2+) as cofactor. In terms of processing, topaquinone (TPQ) is generated by copper-dependent autoxidation of a specific tyrosyl residue.

It is found in the cytoplasm. It catalyses the reaction a primary methyl amine + O2 + H2O = an aldehyde + H2O2 + NH4(+). In terms of biological role, copper amine oxidase involved in the metabolism of xenobiotic and biogenic amines. Capable of catalyzing the oxidative deamination of primary amines such as ethylamine as alternate sources of nitrogen to support growth. This chain is Copper amine oxidase 1 (cao1), found in Schizosaccharomyces pombe (strain 972 / ATCC 24843) (Fission yeast).